A 393-amino-acid chain; its full sequence is Probable acetyl-CoA acyltransferase (393 aa).

Catalysis depends on C88, which acts as the Acyl-thioester intermediate. Catalysis depends on proton acceptor residues H349 and C378.

This sequence belongs to the thiolase-like superfamily. Thiolase family.

It localises to the cytoplasm. The catalysed reaction is 2 acetyl-CoA = acetoacetyl-CoA + CoA. This chain is Probable acetyl-CoA acyltransferase, found in Staphylococcus aureus (strain bovine RF122 / ET3-1).